The sequence spans 115 residues: Large ribosomal subunit protein bL19 (115 aa).

The protein belongs to the bacterial ribosomal protein bL19 family.

This protein is located at the 30S-50S ribosomal subunit interface and may play a role in the structure and function of the aminoacyl-tRNA binding site. This chain is Large ribosomal subunit protein bL19, found in Oleidesulfovibrio alaskensis (strain ATCC BAA-1058 / DSM 17464 / G20) (Desulfovibrio alaskensis).